Consider the following 375-residue polypeptide: Actin, cytoplasmic (375 aa).

Belongs to the actin family.

Its subcellular location is the cytoplasm. The protein resides in the cytoskeleton. It carries out the reaction ATP + H2O = ADP + phosphate + H(+). Functionally, actins are highly conserved proteins that are involved in various types of cell motility and are ubiquitously expressed in all eukaryotic cells. This Oxytricha trifallax (Sterkiella histriomuscorum) protein is Actin, cytoplasmic.